The chain runs to 42 residues: Large ribosomal subunit protein eL32 (42 aa).

The protein belongs to the eukaryotic ribosomal protein eL32 family.

This Zea mays (Maize) protein is Large ribosomal subunit protein eL32 (RPL32).